The primary structure comprises 277 residues: Undecaprenyl-diphosphatase (277 aa).

The next 8 membrane-spanning stretches (helical) occupy residues 1–21 (MDII…FLPV), 38–58 (SSLA…LWFF), 93–113 (LVWY…LFES), 118–138 (LFAG…TILY), 168–188 (AILP…VIGL), 191–211 (EFAA…AFVV), 222–242 (FNAL…YLAI), and 256–276 (IFAY…ITHL).

This sequence belongs to the UppP family.

The protein localises to the cell membrane. It catalyses the reaction di-trans,octa-cis-undecaprenyl diphosphate + H2O = di-trans,octa-cis-undecaprenyl phosphate + phosphate + H(+). Functionally, catalyzes the dephosphorylation of undecaprenyl diphosphate (UPP). The polypeptide is Undecaprenyl-diphosphatase (Methanobrevibacter smithii (strain ATCC 35061 / DSM 861 / OCM 144 / PS)).